The primary structure comprises 435 residues: Serine--tRNA ligase (435 aa).

242–244 (TAE) is a binding site for L-serine. Position 273–275 (273–275 (RSE)) interacts with ATP. Glu296 provides a ligand contact to L-serine. An ATP-binding site is contributed by 360–363 (EISS). Ser396 lines the L-serine pocket.

This sequence belongs to the class-II aminoacyl-tRNA synthetase family. Type-1 seryl-tRNA synthetase subfamily. In terms of assembly, homodimer. The tRNA molecule binds across the dimer.

Its subcellular location is the cytoplasm. The enzyme catalyses tRNA(Ser) + L-serine + ATP = L-seryl-tRNA(Ser) + AMP + diphosphate + H(+). It carries out the reaction tRNA(Sec) + L-serine + ATP = L-seryl-tRNA(Sec) + AMP + diphosphate + H(+). It functions in the pathway aminoacyl-tRNA biosynthesis; selenocysteinyl-tRNA(Sec) biosynthesis; L-seryl-tRNA(Sec) from L-serine and tRNA(Sec): step 1/1. Functionally, catalyzes the attachment of serine to tRNA(Ser). Is also able to aminoacylate tRNA(Sec) with serine, to form the misacylated tRNA L-seryl-tRNA(Sec), which will be further converted into selenocysteinyl-tRNA(Sec). In Vibrio cholerae serotype O1 (strain ATCC 39541 / Classical Ogawa 395 / O395), this protein is Serine--tRNA ligase.